A 141-amino-acid chain; its full sequence is Endoribonuclease YbeY (141 aa).

The Zn(2+) site is built by histidine 107, histidine 111, and aspartate 117.

Belongs to the endoribonuclease YbeY family. Zn(2+) is required as a cofactor.

It is found in the cytoplasm. In terms of biological role, single strand-specific metallo-endoribonuclease involved in late-stage 70S ribosome quality control and in maturation of the 3' terminus of the 16S rRNA. This Endomicrobium trichonymphae protein is Endoribonuclease YbeY.